A 4451-amino-acid polypeptide reads, in one-letter code: Gramicidin S synthase 2 (4451 aa).

The tract at residues 467–1044 is domain 1 (proline-activating); the sequence is DKTIHQLFTE…IQEISNYING (578 aa). Carrier domains are found at residues 971 to 1046, 2006 to 2081, 3052 to 3127, and 4090 to 4165; these read VPTN…NGAK, APSS…ADGQ, RPRT…EETD, and APRN…THQE. S1006, S2041, S3087, and S4125 each carry O-(pantetheine 4'-phosphoryl)serine. The tract at residues 1521–2080 is domain 2 (valine-activating); that stretch reads DHVAVGWKDQ…SALAQYIADG (560 aa). The domain 3 (ornithine-activating) stretch occupies residues 2538–3135; that stretch reads YATNKIFHEL…TDTEQYMAIQ (598 aa). The domain 4 (leucine-activating) stretch occupies residues 3591-4173; sequence IQELFEEQVK…QESENNVHQP (583 aa).

It belongs to the ATP-dependent AMP-binding enzyme family. Large multienzyme complex of GrsA and GrsB. The cofactor is pantetheine 4'-phosphate.

It participates in antibiotic biosynthesis; gramicidin S biosynthesis. In terms of biological role, this protein is a multifunctional enzyme, able to activate and polymerize the amino acids Pro, Val, Orn and Leu. Activation sites for these AA consist of individual domains. The protein is Gramicidin S synthase 2 (grsB) of Aneurinibacillus migulanus (Bacillus migulanus).